The sequence spans 117 residues: Ig heavy chain V region MOPC 173 (117 aa).

The region spanning 1–116 (EVKLLESGGP…WGQGTSVTVS (116 aa)) is the Ig-like domain. Cysteine 22 and cysteine 96 are oxidised to a cystine.

The protein is Ig heavy chain V region MOPC 173 of Mus musculus (Mouse).